The chain runs to 137 residues: Cytochrome c-type biogenesis protein CcmE (137 aa).

At 1–8 (MQKGAKNR) the chain is on the cytoplasmic side. The chain crosses the membrane as a helical; Signal-anchor for type II membrane protein span at residues 9–29 (LITIIICFCSAVIGVSIILYN). The Periplasmic segment spans residues 30–137 (LEKSIVFFVP…NTVIPAKAGI (108 aa)). Heme-binding residues include His120 and Tyr124.

It belongs to the CcmE/CycJ family.

It is found in the cell inner membrane. Its function is as follows. Heme chaperone required for the biogenesis of c-type cytochromes. Transiently binds heme delivered by CcmC and transfers the heme to apo-cytochromes in a process facilitated by CcmF and CcmH. The chain is Cytochrome c-type biogenesis protein CcmE from Rickettsia bellii (strain OSU 85-389).